Reading from the N-terminus, the 224-residue chain is Oocyte zinc finger protein XlCOF6.1 (224 aa).

8 C2H2-type zinc fingers span residues 6 to 28, 34 to 56, 62 to 84, 90 to 112, 118 to 140, 146 to 168, 174 to 196, and 202 to 224; these read FSCS…CRSH, FHCT…QRYH, FTCF…IRMH, FSCS…QKIH, FSCS…YRTH, FPCP…RRTH, FACS…RLGH, and FSCS…LKSH.

Belongs to the krueppel C2H2-type zinc-finger protein family.

The protein resides in the nucleus. Functionally, may be involved in transcriptional regulation. The polypeptide is Oocyte zinc finger protein XlCOF6.1 (Xenopus laevis (African clawed frog)).